The sequence spans 358 residues: Putative UDP-kanosamine synthase oxidoreductase subunit (358 aa).

In terms of assembly, interacts with RifK.

It catalyses the reaction UDP-alpha-D-glucose + NAD(+) = UDP-3-oxo-alpha-D-glucose + NADH + H(+). It functions in the pathway antibiotic biosynthesis; rifamycin B biosynthesis. In terms of biological role, in a complex with RifK, RifL may catalyze the oxidation of UDP-glucose to UDP-3-keto-D-glucose, which would then be used by RifK to produce UDP-kanosamine. Is not able to use dTDP-glucose as substrate. The sequence is that of Putative UDP-kanosamine synthase oxidoreductase subunit (rifL) from Amycolatopsis mediterranei (strain S699) (Nocardia mediterranei).